The primary structure comprises 552 residues: FACT complex subunit POB3 (552 aa).

Residues 190–205 (KKEESSNEVVPKKEDG) show a composition bias toward basic and acidic residues. Disordered stretches follow at residues 190–209 (KKEE…AEGE) and 484–552 (QTAL…PKVE). Over residues 490–529 (DSDEEDINMGSAGEDDESVDEDFQVSSDNDADEVAEEFDS) the composition is skewed to acidic residues. Residues 541 to 552 (DEERPSKKPKVE) show a composition bias toward basic and acidic residues.

The protein belongs to the SSRP1 family. In terms of assembly, forms a stable heterodimer with SPT16. The SPT16-POB3 dimer weakly associates with multiple molecules of NHP6 (NHP6A or NHP6B) to form the FACT (yFACT or SNP) complex. The FACT complex interacts with the CK2 (casein kinase II) complex subunits CKA1, CKA2, CKB1 and CKB2 and the components of the transcription machinery CHD1, CTR9, PAF1 and CDC73. The FACT complex interacts with the PAF1 complex. SPT16 interacts with SAS3 and POL1. Interacts directly with RFA1.

It is found in the nucleus. Its subcellular location is the chromosome. Its function is as follows. Component of the FACT complex, a general chromatin factor that acts to reorganize nucleosomes. The FACT complex is involved in multiple processes that require DNA as a template such as mRNA elongation, DNA replication and DNA repair. During transcription elongation the FACT complex acts as a histone chaperone that both destabilizes and restores nucleosomal structure. It facilitates the passage of RNA polymerase II and transcription by promoting the dissociation of one histone H2A-H2B dimer from the nucleosome, then subsequently promotes the reestablishment of the nucleosome following the passage of RNA polymerase II. Transcription elongation is promoted by the repression of transcription initiation from cryptic sites. Also acts in establishing transcription initiation complexes and promotes SPT15/TBP-binding to a TATA box. Together with replication factor-A protein (RPA), FACT may play a role in nucleosome deposition during DNA replication. In Saccharomyces cerevisiae (strain ATCC 204508 / S288c) (Baker's yeast), this protein is FACT complex subunit POB3 (POB3).